Consider the following 325-residue polypeptide: Eukaryotic translation initiation factor 3 subunit I (325 aa).

WD repeat units lie at residues 8–47, 50–89, 144–183, 186–225, and 283–324; these read GHER…RLGT, GHTG…QLAL, CSES…IVNS, EHSK…HQKT, and GHFG…FEFE.

It belongs to the eIF-3 subunit I family. As to quaternary structure, component of the eukaryotic translation initiation factor 3 (eIF-3) complex, which is composed of 13 subunits: eif3a, eif3b, eif3c, eif3d, eif3e, eif3f, eif3g, eif3h, eif3i, eif3j, eif3k, eif3l and eif3m.

It localises to the cytoplasm. Its function is as follows. Component of the eukaryotic translation initiation factor 3 (eIF-3) complex, which is involved in protein synthesis of a specialized repertoire of mRNAs and, together with other initiation factors, stimulates binding of mRNA and methionyl-tRNAi to the 40S ribosome. The eIF-3 complex specifically targets and initiates translation of a subset of mRNAs involved in cell proliferation. In Xenopus tropicalis (Western clawed frog), this protein is Eukaryotic translation initiation factor 3 subunit I (eif3i).